The primary structure comprises 557 residues: Membrane protein insertase YidC (557 aa).

A helical membrane pass occupies residues 7–27 (ILLVALAVVSYLLVLQWNQDY). A disordered region spans residues 42-77 (ASPALPETVPGDSSTSADVPTAGSGNQVPDSAASTA). Positions 52 to 77 (GDSSTSADVPTAGSGNQVPDSAASTA) are enriched in polar residues. The next 3 membrane-spanning stretches (helical) occupy residues 370-390 (WGWS…PLSA), 436-456 (LGGC…YWVL), and 514-534 (PIIF…YWVV).

It belongs to the OXA1/ALB3/YidC family. Type 1 subfamily. As to quaternary structure, interacts with the Sec translocase complex via SecD. Specifically interacts with transmembrane segments of nascent integral membrane proteins during membrane integration.

It is found in the cell inner membrane. Required for the insertion and/or proper folding and/or complex formation of integral membrane proteins into the membrane. Involved in integration of membrane proteins that insert both dependently and independently of the Sec translocase complex, as well as at least some lipoproteins. Aids folding of multispanning membrane proteins. The sequence is that of Membrane protein insertase YidC from Azotobacter vinelandii (strain DJ / ATCC BAA-1303).